The sequence spans 250 residues: Putative B3 domain-containing protein At4g03170 (250 aa).

A compositionally biased stretch (polar residues) spans 1 to 12 (MANSTGKPTSST). Positions 1 to 90 (MANSTGKPTS…EKNQPKRFKK (90 aa)) are disordered. Residues 34 to 56 (DREEDIDDEDDIDDEVIDDEDYE) show a composition bias toward acidic residues. The segment covering 72 to 84 (QSREREEETEKNQ) has biased composition (basic and acidic residues). The segment at residues 137–245 (KKQLMSSDVD…KLCFAIHYVK (109 aa)) is a DNA-binding region (TF-B3).

The protein resides in the nucleus. This is Putative B3 domain-containing protein At4g03170 from Arabidopsis thaliana (Mouse-ear cress).